The following is a 270-amino-acid chain: Orotidine 5'-phosphate decarboxylase (270 aa).

Substrate contacts are provided by residues Asp41, 63-65, 95-104, Tyr221, and Arg239; these read KTH and DRKFADIGNT. Catalysis depends on Lys97, which acts as the Proton donor.

This sequence belongs to the OMP decarboxylase family.

The catalysed reaction is orotidine 5'-phosphate + H(+) = UMP + CO2. It functions in the pathway pyrimidine metabolism; UMP biosynthesis via de novo pathway; UMP from orotate: step 2/2. The sequence is that of Orotidine 5'-phosphate decarboxylase (URA3) from Candida boidinii (Yeast).